A 250-amino-acid chain; its full sequence is Dihydroorotate dehydrogenase B (NAD(+)), electron transfer subunit (250 aa).

The FAD-binding FR-type domain occupies 1-94 (MKVVAQEEIA…MGPQGNGFDL (94 aa)). FAD-binding positions include 45 to 48 (RPIS), 62 to 64 (IYR), and 69 to 70 (GT). 4 residues coordinate [2Fe-2S] cluster: Cys-214, Cys-219, Cys-222, and Cys-237.

It belongs to the PyrK family. In terms of assembly, heterotetramer of 2 PyrK and 2 PyrD type B subunits. Requires [2Fe-2S] cluster as cofactor. It depends on FAD as a cofactor.

Its pathway is pyrimidine metabolism; UMP biosynthesis via de novo pathway; orotate from (S)-dihydroorotate (NAD(+) route): step 1/1. In terms of biological role, responsible for channeling the electrons from the oxidation of dihydroorotate from the FMN redox center in the PyrD type B subunit to the ultimate electron acceptor NAD(+). In Streptococcus pneumoniae serotype 4 (strain ATCC BAA-334 / TIGR4), this protein is Dihydroorotate dehydrogenase B (NAD(+)), electron transfer subunit.